A 327-amino-acid chain; its full sequence is Phenylalanine--tRNA ligase alpha subunit (327 aa).

Residue Glu-252 participates in Mg(2+) binding.

It belongs to the class-II aminoacyl-tRNA synthetase family. Phe-tRNA synthetase alpha subunit type 1 subfamily. In terms of assembly, tetramer of two alpha and two beta subunits. Mg(2+) serves as cofactor.

It is found in the cytoplasm. It carries out the reaction tRNA(Phe) + L-phenylalanine + ATP = L-phenylalanyl-tRNA(Phe) + AMP + diphosphate + H(+). In Shewanella woodyi (strain ATCC 51908 / MS32), this protein is Phenylalanine--tRNA ligase alpha subunit.